The sequence spans 560 residues: (E)-beta-farnesene synthase (560 aa).

The Mg(2+) site is built by Asp-312, Asp-316, Asp-457, and Glu-465. The short motif at 312 to 316 is the DDXXD motif element; sequence DDTFD.

This sequence belongs to the terpene synthase family. Requires Mg(2+) as cofactor. Co(2+) serves as cofactor. It depends on Mn(2+) as a cofactor.

The protein localises to the cytoplasm. It catalyses the reaction (2E,6E)-farnesyl diphosphate = (E)-beta-farnesene + diphosphate. Its pathway is secondary metabolite biosynthesis; terpenoid biosynthesis. In terms of biological role, sesquiterpene cyclase catalyzing the production of beta-farnesene from farnesyl diphosphate. This Citrus junos (Yuzu) protein is (E)-beta-farnesene synthase.